The sequence spans 1412 residues: DNA-directed RNA polymerase subunit beta' (1412 aa).

Cys-70, Cys-72, Cys-85, and Cys-88 together coordinate Zn(2+). Residues Asp-460, Asp-462, and Asp-464 each contribute to the Mg(2+) site. The Zn(2+) site is built by Cys-814, Cys-888, Cys-895, and Cys-898. The tract at residues 1378-1412 is disordered; the sequence is EREAARQLANPFEDAPVTVDADAPQSDAGQEGSAE.

This sequence belongs to the RNA polymerase beta' chain family. In terms of assembly, the RNAP catalytic core consists of 2 alpha, 1 beta, 1 beta' and 1 omega subunit. When a sigma factor is associated with the core the holoenzyme is formed, which can initiate transcription. Mg(2+) serves as cofactor. Requires Zn(2+) as cofactor.

The catalysed reaction is RNA(n) + a ribonucleoside 5'-triphosphate = RNA(n+1) + diphosphate. In terms of biological role, DNA-dependent RNA polymerase catalyzes the transcription of DNA into RNA using the four ribonucleoside triphosphates as substrates. The sequence is that of DNA-directed RNA polymerase subunit beta' from Bordetella petrii (strain ATCC BAA-461 / DSM 12804 / CCUG 43448).